The following is a 246-amino-acid chain: Pyridoxine 5'-phosphate synthase (246 aa).

Residue asparagine 6 coordinates 3-amino-2-oxopropyl phosphate. Residue 8–9 (DH) coordinates 1-deoxy-D-xylulose 5-phosphate. Arginine 17 is a 3-amino-2-oxopropyl phosphate binding site. Residue histidine 49 is the Proton acceptor of the active site. 1-deoxy-D-xylulose 5-phosphate is bound by residues arginine 51 and histidine 56. Glutamate 76 (proton acceptor) is an active-site residue. Threonine 106 contacts 1-deoxy-D-xylulose 5-phosphate. The Proton donor role is filled by histidine 196. 3-amino-2-oxopropyl phosphate contacts are provided by residues glycine 197 and 219–220 (GH).

It belongs to the PNP synthase family. Homooctamer; tetramer of dimers.

Its subcellular location is the cytoplasm. The catalysed reaction is 3-amino-2-oxopropyl phosphate + 1-deoxy-D-xylulose 5-phosphate = pyridoxine 5'-phosphate + phosphate + 2 H2O + H(+). Its pathway is cofactor biosynthesis; pyridoxine 5'-phosphate biosynthesis; pyridoxine 5'-phosphate from D-erythrose 4-phosphate: step 5/5. Functionally, catalyzes the complicated ring closure reaction between the two acyclic compounds 1-deoxy-D-xylulose-5-phosphate (DXP) and 3-amino-2-oxopropyl phosphate (1-amino-acetone-3-phosphate or AAP) to form pyridoxine 5'-phosphate (PNP) and inorganic phosphate. In Akkermansia muciniphila (strain ATCC BAA-835 / DSM 22959 / JCM 33894 / BCRC 81048 / CCUG 64013 / CIP 107961 / Muc), this protein is Pyridoxine 5'-phosphate synthase.